The primary structure comprises 268 residues: ClpXP adapter protein SpxH (268 aa).

Belongs to the SpxH family. In terms of assembly, interacts with Spx.

It localises to the cytoplasm. Its function is as follows. Adapter protein required for efficient degradation of Spx by ClpXP under non-stress conditions. Interaction with Spx stabilizes Spx and exposes the C-terminus of Spx for recognition and proteolysis by ClpXP. In Staphylococcus aureus (strain Mu3 / ATCC 700698), this protein is ClpXP adapter protein SpxH.